We begin with the raw amino-acid sequence, 324 residues long: Kelch domain-containing protein AF_2170 (324 aa).

Kelch repeat units lie at residues 229 to 276 (YIFA…VGGE) and 277 to 323 (YIYI…NNGK).

This Archaeoglobus fulgidus (strain ATCC 49558 / DSM 4304 / JCM 9628 / NBRC 100126 / VC-16) protein is Kelch domain-containing protein AF_2170.